The sequence spans 331 residues: Cytoplasmic envelopment protein 1 (331 aa).

This sequence belongs to the herpesviridae cytoplasmic envelopment protein 1 family. In terms of assembly, interacts with protein ORF7; this interaction localizes protein ORF53 to the host trans-Golgi network (TGN).

Its subcellular location is the virion. It localises to the virion tegument. It is found in the host cytoplasm. The protein localises to the host Golgi apparatus. Functionally, plays a critical role in cytoplasmic virus egress. Participates in the final step of tegumentation and envelope acquisition within the host cytoplasm. The sequence is that of Cytoplasmic envelopment protein 1 (ORF53) from Varicella-zoster virus (strain Dumas) (HHV-3).